A 194-amino-acid chain; its full sequence is Putative manganese efflux pump MntP (194 aa).

Helical transmembrane passes span Thr-2–Val-22, Phe-40–Ala-60, Val-67–Ala-87, Ala-107–Ile-129, Ile-133–Gly-155, and Leu-168–Val-188.

The protein belongs to the MntP (TC 9.B.29) family.

The protein resides in the cell inner membrane. Functionally, probably functions as a manganese efflux pump. The protein is Putative manganese efflux pump MntP of Rhodopseudomonas palustris (strain BisA53).